Here is a 291-residue protein sequence, read N- to C-terminus: Small ribosomal subunit protein uS2 (291 aa).

The interval 270 to 291 (NINEEANTEFEQALSDADEDKN) is disordered.

Belongs to the universal ribosomal protein uS2 family.

The protein is Small ribosomal subunit protein uS2 of Rickettsia bellii (strain OSU 85-389).